Reading from the N-terminus, the 441-residue chain is GPI mannosyltransferase 2 (441 aa).

10 consecutive transmembrane segments (helical) span residues 4-24, 35-55, 115-135, 143-163, 165-185, 199-223, 249-269, 306-326, 361-381, and 418-438; these read MTVLSPSAGSQSACSLGLILV, ILFGLWKALIFLVIVICPGLG, LLALLASVLVLYRLSVNIFGG, LCFLSAALHIISPAGAFLSAP, GEALFSLLNISGLYLYSSSVL, LLAAAVLISAATAVRSNGILGGVLF, VIVLGGCVIALGMAVPQYIAF, YWVVPNIPLFLLAMPILALLL, LAIIQALLAVLAFTSYHVQII, and VAVQAIMIYGLIHAVLFGSFL.

Belongs to the PIGV family.

It localises to the endoplasmic reticulum membrane. It participates in glycolipid biosynthesis; glycosylphosphatidylinositol-anchor biosynthesis. Its function is as follows. Mannosyltransferase involved in glycosylphosphatidylinositol-anchor biosynthesis. Transfers the second mannose to the glycosylphosphatidylinositol during GPI precursor assembly. This is GPI mannosyltransferase 2 (gpi18) from Aspergillus fumigatus (strain ATCC MYA-4609 / CBS 101355 / FGSC A1100 / Af293) (Neosartorya fumigata).